The following is a 230-amino-acid chain: Ribosome biogenesis protein SLX9 homolog (230 aa).

The segment covering 1-11 has biased composition (basic residues); it reads MGKVRGLRARV. Disordered stretches follow at residues 1 to 42 and 155 to 187; these read MGKV…SAAG and LGLE…AQRQ. Residues 25 to 38 are compositionally biased toward pro residues; sequence GPAPPAPEATPPPA. T34 bears the Phosphothreonine mark. Residues 166–177 are compositionally biased toward basic and acidic residues; that stretch reads RSRESNKPRPSE. Position 203 is a phosphoserine (S203).

The protein belongs to the SLX9 family. In terms of tissue distribution, not detected in any tested tissue.

Its subcellular location is the nucleus. It localises to the nucleolus. Functionally, may be involved in ribosome biogenesis. This Homo sapiens (Human) protein is Ribosome biogenesis protein SLX9 homolog.